The following is a 215-amino-acid chain: Thiamine-phosphate synthase (215 aa).

4-amino-2-methyl-5-(diphosphooxymethyl)pyrimidine is bound by residues Gln-40–Lys-44 and Asn-72. Mg(2+) is bound by residues Asp-73 and Asp-92. Ser-111 lines the 4-amino-2-methyl-5-(diphosphooxymethyl)pyrimidine pocket. A 2-[(2R,5Z)-2-carboxy-4-methylthiazol-5(2H)-ylidene]ethyl phosphate-binding site is contributed by Thr-137–Thr-139. Lys-140 is a 4-amino-2-methyl-5-(diphosphooxymethyl)pyrimidine binding site. 2-[(2R,5Z)-2-carboxy-4-methylthiazol-5(2H)-ylidene]ethyl phosphate contacts are provided by residues Gly-169 and Val-189 to Ser-190.

Belongs to the thiamine-phosphate synthase family. It depends on Mg(2+) as a cofactor.

The catalysed reaction is 2-[(2R,5Z)-2-carboxy-4-methylthiazol-5(2H)-ylidene]ethyl phosphate + 4-amino-2-methyl-5-(diphosphooxymethyl)pyrimidine + 2 H(+) = thiamine phosphate + CO2 + diphosphate. The enzyme catalyses 2-(2-carboxy-4-methylthiazol-5-yl)ethyl phosphate + 4-amino-2-methyl-5-(diphosphooxymethyl)pyrimidine + 2 H(+) = thiamine phosphate + CO2 + diphosphate. It catalyses the reaction 4-methyl-5-(2-phosphooxyethyl)-thiazole + 4-amino-2-methyl-5-(diphosphooxymethyl)pyrimidine + H(+) = thiamine phosphate + diphosphate. Its pathway is cofactor biosynthesis; thiamine diphosphate biosynthesis; thiamine phosphate from 4-amino-2-methyl-5-diphosphomethylpyrimidine and 4-methyl-5-(2-phosphoethyl)-thiazole: step 1/1. Its function is as follows. Condenses 4-methyl-5-(beta-hydroxyethyl)thiazole monophosphate (THZ-P) and 2-methyl-4-amino-5-hydroxymethyl pyrimidine pyrophosphate (HMP-PP) to form thiamine monophosphate (TMP). This Proteus mirabilis (strain HI4320) protein is Thiamine-phosphate synthase.